A 2325-amino-acid polypeptide reads, in one-letter code: Otogelin-like protein (2325 aa).

The signal sequence occupies residues 1-22 (MVPWRALSLPILLVSLRGYVCA). The VWFD 1 domain maps to 112 to 288 (GICKTWGQYH…VLTPDDTKCV (177 aa)). 2 disulfide bridges follow: cysteine 114–cysteine 248 and cysteine 136–cysteine 287. Asparagine 425 carries N-linked (GlcNAc...) asparagine glycosylation. The region spanning 472-645 (VQCSVVGDSH…HAWRVSSTCF (174 aa)) is the VWFD 2 domain. Intrachain disulfides connect cysteine 474-cysteine 609, cysteine 496-cysteine 644, and cysteine 518-cysteine 526. Residues 736 to 791 (CQKGMLYHHCSSLCLRSCTSLSSPEQCKDDCAEGCNCPEGKFYEETLNFCVPIYHC) enclose the TIL 1 domain. N-linked (GlcNAc...) asparagine glycosylation is found at asparagine 817 and asparagine 867. Residues 937 to 1114 (AVCTVYGDRH…DLMEALKPCE (178 aa)) form the VWFD 3 domain. Intrachain disulfides connect cysteine 939/cysteine 1069, cysteine 961/cysteine 1113, and cysteine 983/cysteine 990. Asparagine 1280 carries an N-linked (GlcNAc...) asparagine glycan. One can recognise a TIL 2 domain in the interval 1366 to 1418 (RYEPCATPCFKTCSDPEALACTFLPPVEGCLPYCPKNMILDETTLKCVHPEDC). Positions 1506 to 1695 (CRCSMLSELS…SWEIEKSFEV (190 aa)) constitute a VWFD 4 domain. 2 disulfides stabilise this stretch: cysteine 1508-cysteine 1655 and cysteine 1549-cysteine 1571. N-linked (GlcNAc...) asparagine glycans are attached at residues asparagine 1576 and asparagine 2170. Intrachain disulfides connect cysteine 2233–cysteine 2289, cysteine 2254–cysteine 2303, cysteine 2265–cysteine 2320, and cysteine 2269–cysteine 2322. The 93-residue stretch at 2233 to 2325 (CKREERICQK…EPIDCTCQWN (93 aa)) folds into the CTCK domain. Residue asparagine 2296 is glycosylated (N-linked (GlcNAc...) asparagine).

Belongs to the otogelin family.

The protein resides in the secreted. This chain is Otogelin-like protein (Otogl), found in Mus musculus (Mouse).